Consider the following 213-residue polypeptide: Cytochrome b6 (213 aa).

Residues 30 to 50 traverse the membrane as a helical segment; the sequence is IFFCLGGLTLLCFIVQCLTGI. Residue Cys-33 participates in heme c binding. Residues His-84 and His-98 each contribute to the heme b site. 3 helical membrane-spanning segments follow: residues 88–108, 114–134, and 184–204; these read CQLMILLVFLHMLRVYYTGAF, LNWVAGCFLLVLSLALAFTGY, and LHVMILPAVAIIFLVAHFIMI. Residues His-185 and His-200 each coordinate heme b.

The protein belongs to the cytochrome b family. PetB subfamily. In terms of assembly, the subunits of the cytochrome bc complex are a Rieske Fe-S protein (PetC), cytochrome b6 (PetB), subunit IV (PetD), and a diheme cytochrome c (PetX). Requires heme b as cofactor. Heme c serves as cofactor.

The protein localises to the cell membrane. Component of the cytochrome bc complex which donates electrons to the photosynthetic reaction center. This is Cytochrome b6 from Heliomicrobium gestii (Heliobacterium gestii).